Consider the following 357-residue polypeptide: MMPSTLQTLAKKTLATQHISKKYWPSEEYCYILKCCGLWWHDSPITIFTCIKQILIKTANFKHGLDLNLALMKAVQENNYELIMLFTEWGADINLGLITVNTECTRDLCQKLGAKEALSAKEILEIFYKIQYIKSSNNIIISHELISNHPLFLNNDQLKLRIVGELNAISINFILDEISFNEMLTRYWYSMAILYKLPAAIQYFYQSYKYFKDWRLICSLAYNNVFDLHEIYNKEKTDINIDEMMRLACRYDGNYTTIYYCFMLGADINQAMITSVMNLWDGNLFLCIDLGADVFEECMKIAIEDHNGVLESILSFKNYYSPDVSLLSLKTTDPEKINDLLDEDIYKSKNRLIYKSC.

An ANK repeat occupies 66-98; that stretch reads DLNLALMKAVQENNYELIMLFTEWGADINLGLI.

The protein belongs to the asfivirus MGF 360 family.

Functionally, plays a role in virus cell tropism, and may be required for efficient virus replication in macrophages. This African swine fever virus (isolate Tick/Malawi/Lil 20-1/1983) (ASFV) protein is Protein MGF 360-22R.